Reading from the N-terminus, the 366-residue chain is RNA 3'-terminal phosphate cyclase (366 aa).

Q104, P131, Y294, D297, Q298, and H320 together coordinate ATP. Residue H320 is the Tele-AMP-histidine intermediate of the active site.

Belongs to the RNA 3'-terminal cyclase family. Type 1 subfamily.

It localises to the nucleus. Its subcellular location is the nucleoplasm. The enzyme catalyses a 3'-end 3'-phospho-ribonucleotide-RNA + ATP = a 3'-end 2',3'-cyclophospho-ribonucleotide-RNA + AMP + diphosphate. In terms of biological role, catalyzes the conversion of 3'-phosphate to a 2',3'-cyclic phosphodiester at the end of RNA. The mechanism of action of the enzyme occurs in 3 steps: (A) adenylation of the enzyme by ATP; (B) transfer of adenylate to an RNA-N3'P to produce RNA-N3'PP5'A; (C) and attack of the adjacent 2'-hydroxyl on the 3'-phosphorus in the diester linkage to produce the cyclic end product. Likely functions in some aspects of cellular RNA processing. Function plays an important role in regulating axon regeneration by inhibiting central nervous system (CNS) axon regeneration following optic nerve injury. This Macaca fascicularis (Crab-eating macaque) protein is RNA 3'-terminal phosphate cyclase (RTCA).